Reading from the N-terminus, the 362-residue chain is Photosystem II protein D1 3 (362 aa).

3 consecutive transmembrane segments (helical) span residues 29-46, 118-133, and 142-156; these read YVGWFGVLMIPTLLSATI, HFLIGVFCYLGREWEL, and WICIAYSAPVAAATA. Histidine 118 is a binding site for chlorophyll a. Tyrosine 126 provides a ligand contact to pheophytin a. [CaMn4O5] cluster is bound by residues aspartate 170 and glutamate 189. A helical membrane pass occupies residues 197–218; the sequence is FHMLGVAGVFGGALISAMHGSL. A chlorophyll a-binding site is contributed by histidine 198. Residues histidine 215 and 264–265 each bind a quinone; that span reads AF. Fe cation is bound at residue histidine 215. Position 274 (histidine 274) interacts with Fe cation. The chain crosses the membrane as a helical span at residues 276–290; the sequence is IMAAFPVIGIWFTSL. [CaMn4O5] cluster-binding residues include histidine 334, glutamate 335, aspartate 344, and alanine 346. The propeptide occupies 347–362; that stretch reads GTESAPVAVSTAKVGG.

Belongs to the reaction center PufL/M/PsbA/D family. As to quaternary structure, PSII is composed of 1 copy each of membrane proteins PsbA, PsbB, PsbC, PsbD, PsbE, PsbF, PsbH, PsbI, PsbJ, PsbK, PsbL, PsbM, PsbT, PsbX, Psb30/Ycf12, peripheral proteins PsbO, CyanoQ (PsbQ), PsbU, PsbV and a large number of cofactors. It forms dimeric complexes. The D1/D2 heterodimer binds P680, chlorophylls that are the primary electron donor of PSII, and subsequent electron acceptors. It shares a non-heme iron and each subunit binds pheophytin, quinone, additional chlorophylls, carotenoids and lipids. D1 provides most of the ligands for the Mn4-Ca-O5 cluster of the oxygen-evolving complex (OEC). There is also a Cl(-1) ion associated with D1 and D2, which is required for oxygen evolution. The PSII complex binds additional chlorophylls, carotenoids and specific lipids. is required as a cofactor. Tyr-161 forms a radical intermediate that is referred to as redox-active TyrZ, YZ or Y-Z. In terms of processing, C-terminally processed by CtpA; processing is essential to allow assembly of the oxygen-evolving complex and thus photosynthetic growth.

The protein localises to the cell inner membrane. It catalyses the reaction 2 a plastoquinone + 4 hnu + 2 H2O = 2 a plastoquinol + O2. Its function is as follows. Photosystem II (PSII) is a light-driven water:plastoquinone oxidoreductase that uses light energy to abstract electrons from H(2)O, generating O(2) and a proton gradient subsequently used for ATP formation. It consists of a core antenna complex that captures photons, and an electron transfer chain that converts photonic excitation into a charge separation. The D1/D2 (PsbA/PsbD) reaction center heterodimer binds P680, the primary electron donor of PSII as well as several subsequent electron acceptors. This Gloeobacter violaceus (strain ATCC 29082 / PCC 7421) protein is Photosystem II protein D1 3.